The sequence spans 388 residues: 1-deoxy-D-xylulose 5-phosphate reductoisomerase (388 aa).

Residues T13, G14, S15, I16, R40, N41, and N124 each contribute to the NADPH site. K125 is a 1-deoxy-D-xylulose 5-phosphate binding site. E126 contacts NADPH. D150 contributes to the Mn(2+) binding site. 4 residues coordinate 1-deoxy-D-xylulose 5-phosphate: S151, E152, S176, and H199. E152 is a binding site for Mn(2+). Residue G205 coordinates NADPH. 1-deoxy-D-xylulose 5-phosphate contacts are provided by S212, N217, K218, and E221. Residue E221 participates in Mn(2+) binding.

It belongs to the DXR family. In terms of assembly, homodimer. The cofactor is Mg(2+). Requires Mn(2+) as cofactor. Co(2+) is required as a cofactor.

The catalysed reaction is 2-C-methyl-D-erythritol 4-phosphate + NADP(+) = 1-deoxy-D-xylulose 5-phosphate + NADPH + H(+). The protein operates within isoprenoid biosynthesis; isopentenyl diphosphate biosynthesis via DXP pathway; isopentenyl diphosphate from 1-deoxy-D-xylulose 5-phosphate: step 1/6. Competitively inhibited by the antibiotic fosmidomycin. Its function is as follows. Catalyzes the NADPH-dependent rearrangement and reduction of 1-deoxy-D-xylulose-5-phosphate (DXP) to 2-C-methyl-D-erythritol 4-phosphate (MEP). Cannot use NADH instead of NADPH as the reducing agent. This chain is 1-deoxy-D-xylulose 5-phosphate reductoisomerase, found in Zymomonas mobilis subsp. mobilis (strain ATCC 31821 / ZM4 / CP4).